A 463-amino-acid polypeptide reads, in one-letter code: uncharacterized protein (463 aa).

This is an uncharacterized protein from Alkalihalophilus pseudofirmus (strain ATCC BAA-2126 / JCM 17055 / OF4) (Bacillus pseudofirmus).